Reading from the N-terminus, the 574-residue chain is 5'-nucleotidase (574 aa).

The first 26 residues, 1–26, serve as a signal peptide directing secretion; sequence MNPGAARTPALRILALGALLWPAARP. Zn(2+) contacts are provided by aspartate 36 and histidine 38. Residues cysteine 51 and cysteine 57 are joined by a disulfide bond. Asparagine 53 is a glycosylation site (N-linked (GlcNAc...) asparagine). Residues aspartate 85, asparagine 117, histidine 220, and histidine 243 each coordinate Zn(2+). N-linked (GlcNAc...) asparagine glycosylation is found at asparagine 311 and asparagine 333. Intrachain disulfides connect cysteine 353–cysteine 358 and cysteine 365–cysteine 387. Position 354 (arginine 354) interacts with AMP. Residue arginine 354 coordinates IMP. Positions 390 and 395 each coordinate AMP. The IMP site is built by asparagine 390 and arginine 395. An N-linked (GlcNAc...) asparagine glycan is attached at asparagine 403. Phenylalanine 417 is an AMP binding site. Phenylalanine 417 lines the IMP pocket. Residues cysteine 476 and cysteine 479 are joined by a disulfide bond. Residues phenylalanine 500 and aspartate 506 each coordinate AMP. Residues phenylalanine 500 and aspartate 506 each contribute to the IMP site. Serine 549 carries GPI-anchor amidated serine lipidation. Positions 550–574 are cleaved as a propeptide — removed in mature form; it reads AGSHCCGSFSLIFLSVLAVIIILYQ.

The protein belongs to the 5'-nucleotidase family. Homodimer. It depends on Zn(2+) as a cofactor.

The protein localises to the cell membrane. The enzyme catalyses a ribonucleoside 5'-phosphate + H2O = a ribonucleoside + phosphate. It carries out the reaction a 2'-deoxyribonucleoside 5'-phosphate + H2O = a 2'-deoxyribonucleoside + phosphate. The catalysed reaction is dTMP + H2O = thymidine + phosphate. It catalyses the reaction CMP + H2O = cytidine + phosphate. The enzyme catalyses IMP + H2O = inosine + phosphate. It carries out the reaction AMP + H2O = adenosine + phosphate. The catalysed reaction is GMP + H2O = guanosine + phosphate. It catalyses the reaction UMP + H2O = uridine + phosphate. The enzyme catalyses dAMP + H2O = 2'-deoxyadenosine + phosphate. It carries out the reaction dCMP + H2O = 2'-deoxycytidine + phosphate. In terms of biological role, catalyzes the hydrolysis of nucleotide monophosphates, releasing inorganic phosphate and the corresponding nucleoside, with AMP being the preferred substrate. Shows a preference for ribonucleotide monophosphates over their equivalent deoxyribose forms. Other substrates include IMP, UMP, GMP, CMP, dAMP, dCMP, dTMP, NAD and NMN. The protein is 5'-nucleotidase (NT5E) of Bos taurus (Bovine).